The sequence spans 126 residues: Glycine cleavage system H protein (126 aa).

The 82-residue stretch at 24 to 105 (TLTVGITDHA…AYGVWLFKIK (82 aa)) folds into the Lipoyl-binding domain. Lys65 is modified (N6-lipoyllysine).

This sequence belongs to the GcvH family. The glycine cleavage system is composed of four proteins: P, T, L and H. The cofactor is (R)-lipoate.

Its function is as follows. The glycine cleavage system catalyzes the degradation of glycine. The H protein shuttles the methylamine group of glycine from the P protein to the T protein. This Burkholderia ambifaria (strain MC40-6) protein is Glycine cleavage system H protein.